Consider the following 227-residue polypeptide: ATP-dependent dethiobiotin synthetase BioD (227 aa).

Residue 13-18 (NIGKTV) coordinates ATP. T17 contacts Mg(2+). The active site involves K38. ATP-binding positions include D55 and 116-119 (EGIG). Mg(2+) is bound by residues D55 and E116.

This sequence belongs to the dethiobiotin synthetase family. As to quaternary structure, homodimer. Requires Mg(2+) as cofactor.

It is found in the cytoplasm. It carries out the reaction (7R,8S)-7,8-diammoniononanoate + CO2 + ATP = (4R,5S)-dethiobiotin + ADP + phosphate + 3 H(+). It participates in cofactor biosynthesis; biotin biosynthesis; biotin from 7,8-diaminononanoate: step 1/2. Its function is as follows. Catalyzes a mechanistically unusual reaction, the ATP-dependent insertion of CO2 between the N7 and N8 nitrogen atoms of 7,8-diaminopelargonic acid (DAPA, also called 7,8-diammoniononanoate) to form a ureido ring. The polypeptide is ATP-dependent dethiobiotin synthetase BioD (Buchnera aphidicola subsp. Baizongia pistaciae (strain Bp)).